The sequence spans 100 residues: NADH-quinone oxidoreductase subunit K (100 aa).

3 helical membrane passes run 4–24, 28–48, and 60–80; these read LTHG…GLVI, LLFM…AFVV, and VMYI…LALL.

Belongs to the complex I subunit 4L family. NDH-1 is composed of 13 different subunits. Subunits NuoA, H, J, K, L, M, N constitute the membrane sector of the complex.

The protein localises to the cell inner membrane. It carries out the reaction a quinone + NADH + 5 H(+)(in) = a quinol + NAD(+) + 4 H(+)(out). Its function is as follows. NDH-1 shuttles electrons from NADH, via FMN and iron-sulfur (Fe-S) centers, to quinones in the respiratory chain. The immediate electron acceptor for the enzyme in this species is believed to be ubiquinone. Couples the redox reaction to proton translocation (for every two electrons transferred, four hydrogen ions are translocated across the cytoplasmic membrane), and thus conserves the redox energy in a proton gradient. The protein is NADH-quinone oxidoreductase subunit K of Enterobacter sp. (strain 638).